The following is a 1357-amino-acid chain: DNA-directed RNA polymerase subunit beta (1357 aa).

This sequence belongs to the RNA polymerase beta chain family. As to quaternary structure, the RNAP catalytic core consists of 2 alpha, 1 beta, 1 beta' and 1 omega subunit. When a sigma factor is associated with the core the holoenzyme is formed, which can initiate transcription.

The enzyme catalyses RNA(n) + a ribonucleoside 5'-triphosphate = RNA(n+1) + diphosphate. Functionally, DNA-dependent RNA polymerase catalyzes the transcription of DNA into RNA using the four ribonucleoside triphosphates as substrates. The sequence is that of DNA-directed RNA polymerase subunit beta from Nitrosospira multiformis (strain ATCC 25196 / NCIMB 11849 / C 71).